The chain runs to 513 residues: ATP synthase subunit alpha (513 aa).

ATP is bound at residue 169–176 (GDRQTGKT).

This sequence belongs to the ATPase alpha/beta chains family. F-type ATPases have 2 components, CF(1) - the catalytic core - and CF(0) - the membrane proton channel. CF(1) has five subunits: alpha(3), beta(3), gamma(1), delta(1), epsilon(1). CF(0) has three main subunits: a(1), b(2) and c(9-12). The alpha and beta chains form an alternating ring which encloses part of the gamma chain. CF(1) is attached to CF(0) by a central stalk formed by the gamma and epsilon chains, while a peripheral stalk is formed by the delta and b chains.

It localises to the cell inner membrane. The enzyme catalyses ATP + H2O + 4 H(+)(in) = ADP + phosphate + 5 H(+)(out). Functionally, produces ATP from ADP in the presence of a proton gradient across the membrane. The alpha chain is a regulatory subunit. The polypeptide is ATP synthase subunit alpha (Haemophilus influenzae (strain ATCC 51907 / DSM 11121 / KW20 / Rd)).